Here is a 131-residue protein sequence, read N- to C-terminus: Small ribosomal subunit protein uS11 (131 aa).

Positions 1–15 (MAAKTVKKTRRRKER) are enriched in basic residues. Residues 1–23 (MAAKTVKKTRRRKERKNVEHGAA) form a disordered region.

Belongs to the universal ribosomal protein uS11 family. Part of the 30S ribosomal subunit. Interacts with proteins S7 and S18. Binds to IF-3.

Its function is as follows. Located on the platform of the 30S subunit, it bridges several disparate RNA helices of the 16S rRNA. Forms part of the Shine-Dalgarno cleft in the 70S ribosome. The protein is Small ribosomal subunit protein uS11 of Clostridium beijerinckii (strain ATCC 51743 / NCIMB 8052) (Clostridium acetobutylicum).